The following is a 231-amino-acid chain: Proteasome subunit alpha type-2 (231 aa).

This sequence belongs to the peptidase T1A family. As to quaternary structure, the 26S proteasome consists of a 20S proteasome core and two 19S regulatory subunits. The 20S proteasome core is composed of 28 subunits that are arranged in four stacked rings, resulting in a barrel-shaped structure. The two end rings are each formed by seven alpha subunits, and the two central rings are each formed by seven beta subunits. The catalytic chamber with the active sites is on the inside of the barrel.

The protein resides in the cytoplasm. Its subcellular location is the nucleus. Its function is as follows. The proteasome is a multicatalytic proteinase complex which is characterized by its ability to cleave peptides with Arg, Phe, Tyr, Leu, and Glu adjacent to the leaving group at neutral or slightly basic pH. The proteasome has an ATP-dependent proteolytic activity. The protein is Proteasome subunit alpha type-2 of Trypanosoma brucei brucei.